The primary structure comprises 929 residues: Isoleucine--tRNA ligase (929 aa).

The short motif at 58-68 (PYANGDIHIGH) is the 'HIGH' region element. Residue E563 coordinates L-isoleucyl-5'-AMP. Positions 605 to 609 (KMSKS) match the 'KMSKS' region motif. K608 is a binding site for ATP. Residues C892, C895, C912, and C915 each contribute to the Zn(2+) site.

It belongs to the class-I aminoacyl-tRNA synthetase family. IleS type 1 subfamily. In terms of assembly, monomer. Zn(2+) serves as cofactor.

It is found in the cytoplasm. The enzyme catalyses tRNA(Ile) + L-isoleucine + ATP = L-isoleucyl-tRNA(Ile) + AMP + diphosphate. In terms of biological role, catalyzes the attachment of isoleucine to tRNA(Ile). As IleRS can inadvertently accommodate and process structurally similar amino acids such as valine, to avoid such errors it has two additional distinct tRNA(Ile)-dependent editing activities. One activity is designated as 'pretransfer' editing and involves the hydrolysis of activated Val-AMP. The other activity is designated 'posttransfer' editing and involves deacylation of mischarged Val-tRNA(Ile). In Neisseria meningitidis serogroup C (strain 053442), this protein is Isoleucine--tRNA ligase.